A 72-amino-acid chain; its full sequence is Translation initiation factor IF-1 (72 aa).

An S1-like domain is found at 1-72 (MARDDVIEVD…DRGRITFRYK (72 aa)).

It belongs to the IF-1 family. Component of the 30S ribosomal translation pre-initiation complex which assembles on the 30S ribosome in the order IF-2 and IF-3, IF-1 and N-formylmethionyl-tRNA(fMet); mRNA recruitment can occur at any time during PIC assembly.

The protein localises to the cytoplasm. One of the essential components for the initiation of protein synthesis. Stabilizes the binding of IF-2 and IF-3 on the 30S subunit to which N-formylmethionyl-tRNA(fMet) subsequently binds. Helps modulate mRNA selection, yielding the 30S pre-initiation complex (PIC). Upon addition of the 50S ribosomal subunit IF-1, IF-2 and IF-3 are released leaving the mature 70S translation initiation complex. The chain is Translation initiation factor IF-1 from Helicobacter acinonychis (strain Sheeba).